The sequence spans 528 residues: Inorganic phosphate transporter 1-2 (528 aa).

The Cytoplasmic portion of the chain corresponds to 1–24; the sequence is MAGSQLNVLVKLDQAKTQWYHFMA. A helical membrane pass occupies residues 25-45; it reads IVIAGMGFFTDAYDLFCIALV. Over 46 to 71 the chain is Extracellular; the sequence is TKLLGRLYYTDITKPNPGTLPPNVSS. The helical transmembrane segment at 72 to 92 threads the bilayer; it reads AVTGVALCGTLAGQLFFGWLG. Topologically, residues 93-99 are cytoplasmic; sequence DKLGRKS. The helical transmembrane segment at 100-120 threads the bilayer; that stretch reads VYGFTLILMVVCSIASGLSFG. The Extracellular portion of the chain corresponds to 121-125; the sequence is HTPKS. A helical membrane pass occupies residues 126–146; that stretch reads VIATLCFFRFWLGFGIGGDYP. At 147–163 the chain is on the cytoplasmic side; the sequence is LSATIMSEYASKKTRGA. A helical transmembrane segment spans residues 164 to 184; the sequence is FIAAVFAMQGFGILFGAIVAL. The Extracellular portion of the chain corresponds to 185–212; sequence VVSAGFRHAYPAPSYAQNPAASLAPQAD. The chain crosses the membrane as a helical span at residues 213–232; it reads YTWRLILMFGTIPAGLTYYW. At 233–296 the chain is on the cytoplasmic side; the sequence is RMKMPETARY…RQFMKRHGMH (64 aa). Residues 297–317 traverse the membrane as a helical segment; the sequence is LLATTSTWFLLDIAFYSQNLF. At 318–348 the chain is on the extracellular side; the sequence is QKDIFSKVGWIPPAKTMNALEELYRISRAQA. Residues 349 to 369 traverse the membrane as a helical segment; it reads LIALCGTIPGYWFTVAFIDIV. Over 370 to 371 the chain is Cytoplasmic; that stretch reads GR. The chain crosses the membrane as a helical span at residues 372-392; sequence FWIQIMGFFMMTVFMLALGVP. Residues 393–405 are Extracellular-facing; that stretch reads YDHWTHPAHHTGF. The chain crosses the membrane as a helical span at residues 406-426; that stretch reads VVLYALTFFFANFGPNSTTFI. Residues 427–442 are Cytoplasmic-facing; sequence VPAEIFPARLRSTCHG. A helical membrane pass occupies residues 443–463; the sequence is ISAASGKAGAIIGAFGFLYAA. Residues 464–481 lie on the Extracellular side of the membrane; sequence QDQHNPDAGYSRGIGIRN. Residues 482–502 traverse the membrane as a helical segment; the sequence is ALFVLAGTNFLGMLMTLLVPE. The Cytoplasmic portion of the chain corresponds to 503–528; it reads SKGLSLEEMSKDNVVDETAQEAIAQA.

This sequence belongs to the major facilitator superfamily. Phosphate:H(+) symporter (TC 2.A.1.9) family. As to expression, expressed in the root stele and leaf phloem and xylem.

The protein localises to the membrane. Its function is as follows. Low-affinity transporter for inorganic phosphate (Pi). Involved in internal Pi transport from root to shoot. Responsible for most of the PHR2-mediated accumulation of excess shoot Pi under abundant Pi conditions, but not for PHO2-mediated accumulation of excess shoot Pi. Acts as a H(+):phosphate symporter. This chain is Inorganic phosphate transporter 1-2 (PTH1-2), found in Oryza sativa subsp. japonica (Rice).